The primary structure comprises 482 residues: D-inositol 3-phosphate glycosyltransferase (482 aa).

His63 contacts 1D-myo-inositol 3-phosphate. Residues 69–70 and Gly77 contribute to the UDP-N-acetyl-alpha-D-glucosamine site; that span reads QP. Residues 74–79, Lys132, Tyr165, Thr189, and Arg209 contribute to the 1D-myo-inositol 3-phosphate site; that span reads DAGGMN. UDP-N-acetyl-alpha-D-glucosamine contacts are provided by Arg289, Lys294, and Gln355. The Mg(2+) site is built by Tyr364, Arg365, and Ala367. The UDP-N-acetyl-alpha-D-glucosamine site is built by Glu377 and Glu385. Mg(2+) is bound at residue Thr391.

It belongs to the glycosyltransferase group 1 family. MshA subfamily. In terms of assembly, homodimer.

The catalysed reaction is 1D-myo-inositol 3-phosphate + UDP-N-acetyl-alpha-D-glucosamine = 1D-myo-inositol 2-acetamido-2-deoxy-alpha-D-glucopyranoside 3-phosphate + UDP + H(+). Catalyzes the transfer of a N-acetyl-glucosamine moiety to 1D-myo-inositol 3-phosphate to produce 1D-myo-inositol 2-acetamido-2-deoxy-glucopyranoside 3-phosphate in the mycothiol biosynthesis pathway. This Salinispora tropica (strain ATCC BAA-916 / DSM 44818 / JCM 13857 / NBRC 105044 / CNB-440) protein is D-inositol 3-phosphate glycosyltransferase.